Consider the following 256-residue polypeptide: Ubiquinone/menaquinone biosynthesis C-methyltransferase UbiE (256 aa).

The segment covering 1–12 (MNDQRKGDHAEP) has biased composition (basic and acidic residues). The interval 1-23 (MNDQRKGDHAEPTTHFGYQDVPE) is disordered. S-adenosyl-L-methionine contacts are provided by residues Thr-79, Asp-100, and 128–129 (DA).

Belongs to the class I-like SAM-binding methyltransferase superfamily. MenG/UbiE family.

It catalyses the reaction a 2-demethylmenaquinol + S-adenosyl-L-methionine = a menaquinol + S-adenosyl-L-homocysteine + H(+). The catalysed reaction is a 2-methoxy-6-(all-trans-polyprenyl)benzene-1,4-diol + S-adenosyl-L-methionine = a 5-methoxy-2-methyl-3-(all-trans-polyprenyl)benzene-1,4-diol + S-adenosyl-L-homocysteine + H(+). The protein operates within quinol/quinone metabolism; menaquinone biosynthesis; menaquinol from 1,4-dihydroxy-2-naphthoate: step 2/2. It functions in the pathway cofactor biosynthesis; ubiquinone biosynthesis. In terms of biological role, methyltransferase required for the conversion of demethylmenaquinol (DMKH2) to menaquinol (MKH2) and the conversion of 2-polyprenyl-6-methoxy-1,4-benzoquinol (DDMQH2) to 2-polyprenyl-3-methyl-6-methoxy-1,4-benzoquinol (DMQH2). The protein is Ubiquinone/menaquinone biosynthesis C-methyltransferase UbiE of Pseudomonas putida (strain GB-1).